The primary structure comprises 357 residues: D-alanine--D-alanine ligase A (357 aa).

The 206-residue stretch at 143-348 (KRLLREAGLA…YSKVIDVLIE (206 aa)) folds into the ATP-grasp domain. 171–226 (AGALGLPFFAKPARQGSSFGVSKVHDRDGFEQAVETALRYDSKALIEEFVDGREIE) is an ATP binding site. Mg(2+)-binding residues include aspartate 302, glutamate 315, and asparagine 317.

Belongs to the D-alanine--D-alanine ligase family. The cofactor is Mg(2+). Mn(2+) serves as cofactor.

The protein localises to the cytoplasm. It carries out the reaction 2 D-alanine + ATP = D-alanyl-D-alanine + ADP + phosphate + H(+). The protein operates within cell wall biogenesis; peptidoglycan biosynthesis. Cell wall formation. This Mesorhizobium japonicum (strain LMG 29417 / CECT 9101 / MAFF 303099) (Mesorhizobium loti (strain MAFF 303099)) protein is D-alanine--D-alanine ligase A.